The chain runs to 98 residues: VQ motif-containing protein 1 (98 aa).

Positions 27 to 36 (FKTIVQELTG) match the VQ motif.

In terms of assembly, interacts with WRKY33.

It is found in the nucleus. In terms of biological role, may modulate WRKY transcription factor activities. The sequence is that of VQ motif-containing protein 1 from Arabidopsis thaliana (Mouse-ear cress).